A 309-amino-acid polypeptide reads, in one-letter code: Taste receptor type 2 member 31 (309 aa).

The Extracellular portion of the chain corresponds to 1–2; it reads MT. The helical transmembrane segment at 3–23 threads the bilayer; that stretch reads TFIPIIFSSLVMVMFVTGNFA. The Cytoplasmic segment spans residues 24–55; it reads NGFIALVNSIESVKRQKISYADQILTALAVSR. Residues 56 to 76 form a helical membrane-spanning segment; it reads IGLLWVLLLNWYSTVLNPAFY. Topologically, residues 77–100 are extracellular; it reads SVEVRTTAYNVWAVTGHFSNWLAT. The chain crosses the membrane as a helical span at residues 101-121; it reads SLSIFYLLKIANFSNLIFLHL. The Cytoplasmic segment spans residues 122 to 126; that stretch reads KRRVK. Residues 127–147 form a helical membrane-spanning segment; sequence SVILVMLLGPLLFLACQLFVI. The Extracellular segment spans residues 148 to 181; sequence NMKEIVQTKEYEGNXTWKIKLRSAVYLSDATVTT. Asn-161 carries N-linked (GlcNAc...) asparagine glycosylation. A helical transmembrane segment spans residues 182 to 202; sequence LGNLVPFTLTLLCFLLLICSL. Residues 203-229 are Cytoplasmic-facing; it reads CKHLKKMQLHGKGSQDPSMKVHIKALQ. A helical transmembrane segment spans residues 230 to 250; the sequence is TVTSFLLLCAIYFLSIMISVW. Topologically, residues 251-259 are extracellular; it reads SLGSLKNKP. A helical membrane pass occupies residues 260–280; sequence VFMFCKAMRFSYPSIHPFILI. The Cytoplasmic segment spans residues 281-309; the sequence is WGNKKLKQTFLSVLQQVRYWVKGEKPSSP.

It belongs to the G-protein coupled receptor T2R family.

The protein resides in the membrane. Functionally, receptor that may play a role in the perception of bitterness and is gustducin-linked. May play a role in sensing the chemical composition of the gastrointestinal content. The activity of this receptor may stimulate alpha gustducin, mediate PLC-beta-2 activation and lead to the gating of TRPM5. The polypeptide is Taste receptor type 2 member 31 (TAS2R31) (Gorilla gorilla gorilla (Western lowland gorilla)).